The following is a 398-amino-acid chain: Lysophospholipid transporter LplT (398 aa).

11 helical membrane passes run 19 to 39 (VIAA…ATLA), 53 to 73 (ILQM…GQVA), 91 to 111 (LGAA…LVGI), 139 to 159 (LMEA…GVLA), 164 to 184 (IAAL…NLFI), 227 to 247 (LFWG…PVAL), 257 to 277 (YLNA…AKLV), 281 to 301 (TVAR…IFSL), 304 to 324 (ALLP…FFVV), 350 to 370 (GENS…LVGI), and 372 to 392 (VVAI…ALWI).

It belongs to the major facilitator superfamily. LplT (TC 2.A.1.42) family.

The protein resides in the cell inner membrane. Its function is as follows. Catalyzes the facilitated diffusion of 2-acyl-glycero-3-phosphoethanolamine (2-acyl-GPE) into the cell. The protein is Lysophospholipid transporter LplT of Citrobacter koseri (strain ATCC BAA-895 / CDC 4225-83 / SGSC4696).